The following is a 305-amino-acid chain: tRNA dimethylallyltransferase (305 aa).

G9 to S16 contributes to the ATP binding site. A substrate-binding site is contributed by T11–S16. The tract at residues D34–Q37 is interaction with substrate tRNA.

The protein belongs to the IPP transferase family. Monomer. Mg(2+) is required as a cofactor.

It catalyses the reaction adenosine(37) in tRNA + dimethylallyl diphosphate = N(6)-dimethylallyladenosine(37) in tRNA + diphosphate. Its function is as follows. Catalyzes the transfer of a dimethylallyl group onto the adenine at position 37 in tRNAs that read codons beginning with uridine, leading to the formation of N6-(dimethylallyl)adenosine (i(6)A). This chain is tRNA dimethylallyltransferase, found in Anaplasma marginale (strain Florida).